Reading from the N-terminus, the 510-residue chain is NAD(P)H-quinone oxidoreductase subunit 2 A, chloroplastic (510 aa).

14 consecutive transmembrane segments (helical) span residues 31-51, 59-79, 99-119, 124-144, 149-169, 184-204, 229-249, 261-281, 295-315, 323-343, 354-374, 395-415, 418-438, and 484-504; these read FIFP…IDLT, WFYF…LFRW, IFQF…VEYI, MAIT…MFLC, LITI…LSGY, LLMG…LYGL, ISIA…LAPF, PTPV…ALAT, WHLL…LLAI, MLAY…IVGD, YMLF…LFGL, ALSL…AGFF, LYLF…IGLL, and MTVC…ILAI.

Belongs to the complex I subunit 2 family. In terms of assembly, NDH is composed of at least 16 different subunits, 5 of which are encoded in the nucleus.

The protein resides in the plastid. It is found in the chloroplast thylakoid membrane. The enzyme catalyses a plastoquinone + NADH + (n+1) H(+)(in) = a plastoquinol + NAD(+) + n H(+)(out). It catalyses the reaction a plastoquinone + NADPH + (n+1) H(+)(in) = a plastoquinol + NADP(+) + n H(+)(out). NDH shuttles electrons from NAD(P)H:plastoquinone, via FMN and iron-sulfur (Fe-S) centers, to quinones in the photosynthetic chain and possibly in a chloroplast respiratory chain. The immediate electron acceptor for the enzyme in this species is believed to be plastoquinone. Couples the redox reaction to proton translocation, and thus conserves the redox energy in a proton gradient. This is NAD(P)H-quinone oxidoreductase subunit 2 A, chloroplastic from Saccharum hybrid (Sugarcane).